The following is a 30-amino-acid chain: Nattererin-2 (30 aa).

Expressed by the skin glands.

The protein localises to the secreted. Functionally, probably has antibacterial activity. This Physalaemus nattereri (Cuyaba dwarf frog) protein is Nattererin-2.